The following is a 117-amino-acid chain: DNA-binding protein VNG_2008H (117 aa).

The segment at 1–59 is disordered; sequence MSGNPDDDRLEELRQRKKEQLKQQQQGGDAEREAQQQQAQQAEQQKQAMLKQNLTDGAR. The span at 11–21 shows a compositional bias: basic and acidic residues; it reads EELRQRKKEQL. Residues 35–48 show a composition bias toward low complexity; it reads QQQQAQQAEQQKQA.

It belongs to the PDCD5 family.

The polypeptide is DNA-binding protein VNG_2008H (Halobacterium salinarum (strain ATCC 700922 / JCM 11081 / NRC-1) (Halobacterium halobium)).